A 171-amino-acid chain; its full sequence is Protein ups1 homolog (171 aa).

The segment at 1-79 is required for mitochondrial targeting; sequence MTAICTDKTE…LNVNKSYILE (79 aa). The region spanning 2-171 is the PRELI/MSF1 domain; that stretch reads TAICTDKTEL…YVIQQKFQPS (170 aa).

It is found in the mitochondrion inner membrane. The protein localises to the mitochondrion intermembrane space. Its function is as follows. Required for maintenance of normal mitochondrial morphology as well as PCP1-dependent processing of MGM1. This chain is Protein ups1 homolog, found in Schizosaccharomyces pombe (strain 972 / ATCC 24843) (Fission yeast).